The sequence spans 58 residues: Putative transcript Y 13 protein (58 aa).

Residues 17–37 traverse the membrane as a helical segment; sequence LLGWDLNLSLFLGLCLMLLLA.

The protein localises to the membrane. This chain is Putative transcript Y 13 protein (TTTY13), found in Homo sapiens (Human).